Here is a 144-residue protein sequence, read N- to C-terminus: 3-hydroxyacyl-[acyl-carrier-protein] dehydratase FabZ (144 aa).

His47 is an active-site residue.

This sequence belongs to the thioester dehydratase family. FabZ subfamily.

The protein localises to the cytoplasm. The catalysed reaction is a (3R)-hydroxyacyl-[ACP] = a (2E)-enoyl-[ACP] + H2O. Its function is as follows. Involved in unsaturated fatty acids biosynthesis. Catalyzes the dehydration of short chain beta-hydroxyacyl-ACPs and long chain saturated and unsaturated beta-hydroxyacyl-ACPs. The chain is 3-hydroxyacyl-[acyl-carrier-protein] dehydratase FabZ from Dechloromonas aromatica (strain RCB).